The sequence spans 206 residues: Thymidylate kinase (206 aa).

11–18 serves as a coordination point for ATP; the sequence is GIDGAGKT.

This sequence belongs to the thymidylate kinase family.

The catalysed reaction is dTMP + ATP = dTDP + ADP. Its function is as follows. Phosphorylation of dTMP to form dTDP in both de novo and salvage pathways of dTTP synthesis. The polypeptide is Thymidylate kinase (Burkholderia ambifaria (strain MC40-6)).